A 259-amino-acid polypeptide reads, in one-letter code: Proteasome subunit alpha (259 aa).

Belongs to the peptidase T1A family. As to quaternary structure, the 20S proteasome core is composed of 14 alpha and 14 beta subunits that assemble into four stacked heptameric rings, resulting in a barrel-shaped structure. The two inner rings, each composed of seven catalytic beta subunits, are sandwiched by two outer rings, each composed of seven alpha subunits. The catalytic chamber with the active sites is on the inside of the barrel. Has a gated structure, the ends of the cylinder being occluded by the N-termini of the alpha-subunits. Is capped at one or both ends by the proteasome regulatory ATPase, PAN.

It is found in the cytoplasm. With respect to regulation, the formation of the proteasomal ATPase PAN-20S proteasome complex, via the docking of the C-termini of PAN into the intersubunit pockets in the alpha-rings, triggers opening of the gate for substrate entry. Interconversion between the open-gate and close-gate conformations leads to a dynamic regulation of the 20S proteasome proteolysis activity. Its function is as follows. Component of the proteasome core, a large protease complex with broad specificity involved in protein degradation. In Methanococcus maripaludis (strain C5 / ATCC BAA-1333), this protein is Proteasome subunit alpha.